We begin with the raw amino-acid sequence, 426 residues long: Enolase (426 aa).

Gln-163 serves as a coordination point for (2R)-2-phosphoglycerate. The Proton donor role is filled by Glu-205. 3 residues coordinate Mg(2+): Asp-242, Glu-285, and Asp-312. Lys-337, Arg-366, Ser-367, and Lys-388 together coordinate (2R)-2-phosphoglycerate. The active-site Proton acceptor is the Lys-337.

It belongs to the enolase family. Requires Mg(2+) as cofactor.

It localises to the cytoplasm. Its subcellular location is the secreted. It is found in the cell surface. The catalysed reaction is (2R)-2-phosphoglycerate = phosphoenolpyruvate + H2O. It functions in the pathway carbohydrate degradation; glycolysis; pyruvate from D-glyceraldehyde 3-phosphate: step 4/5. Catalyzes the reversible conversion of 2-phosphoglycerate (2-PG) into phosphoenolpyruvate (PEP). It is essential for the degradation of carbohydrates via glycolysis. In Phenylobacterium zucineum (strain HLK1), this protein is Enolase.